A 616-amino-acid chain; its full sequence is FAD-linked oxidoreductase cheF (616 aa).

In terms of domain architecture, FAD-binding PCMH-type spans 160 to 344; the sequence is NQGLVSPWYV…LSMTVRVEPA (185 aa).

The protein belongs to the oxygen-dependent FAD-linked oxidoreductase family. FAD serves as cofactor.

It participates in secondary metabolite biosynthesis. Its function is as follows. FAD-linked oxidoreductase; part of the gene cluster that mediates the biosynthesis of chaetoglobosin A which has a unique inhibitory activity against actin polymerization in mammalian cells. Chaetoglobosin A and its intermediates are involved in the morphological differentiation of C.globosum. The first step of the pathway is the synthesis of prochaetoglobosin I via condensation of one acetyl-CoA, 8 malonyl-CoA, and a L-tryptophan molecule by the PKS-NRPS hybrid synthetase cheA, followed by reduction of backbone double bond to install desired geometry by the enoyl reductase cheB. Further multiple oxidation steps performed by the cytochrome P450 monooxygenases cheE and cheG, as well as by the FAD-linked oxidoreductase cheF, lead to the formation of chaetoglobosin A. Depending on the order of action of these reductases, distinct intermediates can be identified. Within the pathway, the cytochrome P450 monooxygenase cheE catalyzes a stereospecific epoxidation on prochaetoglobosin I, cytoglobosin D, and chaetoglobosin J intermediates. The FAD-linked oxidoreductase cheF performs dehydrogenation of the C-20 hydroxyl groups in the 20-dihyrochaetoglobosin A and cytoglobosin D intermediates. Finally, the cytochrome P450 monooxygenase cheG can catalyze the stereospecific dihydroxylation of prochaetoglobosin I and prochaetoglobosin IV at C-19 and C-20, respectively. The Diels-Alderase cheD may play a role in the post-PKS-NRPS biosynthetic steps catalyzing Diels-Alder cyclization. The protein is FAD-linked oxidoreductase cheF of Chaetomium globosum (strain ATCC 6205 / CBS 148.51 / DSM 1962 / NBRC 6347 / NRRL 1970) (Soil fungus).